Here is a 208-residue protein sequence, read N- to C-terminus: ATP synthase subunit beta, chloroplastic (208 aa).

Belongs to the ATPase alpha/beta chains family. F-type ATPases have 2 components, CF(1) - the catalytic core - and CF(0) - the membrane proton channel. CF(1) has five subunits: alpha(3), beta(3), gamma(1), delta(1), epsilon(1). CF(0) has four main subunits: a(1), b(1), b'(1) and c(9-12).

The protein resides in the plastid. Its subcellular location is the chloroplast thylakoid membrane. It catalyses the reaction ATP + H2O + 4 H(+)(in) = ADP + phosphate + 5 H(+)(out). Its function is as follows. Produces ATP from ADP in the presence of a proton gradient across the membrane. The catalytic sites are hosted primarily by the beta subunits. The protein is ATP synthase subunit beta, chloroplastic (atpB) of Hypolepis hostilis (Fern).